The following is a 79-amino-acid chain: uncharacterized protein (79 aa).

Residues 1 to 27 (MRQRGQEHLPTSVKSEPRACNNPTVAE) are disordered.

This is an uncharacterized protein from Homo sapiens (Human).